Here is a 482-residue protein sequence, read N- to C-terminus: Cobyric acid synthase (482 aa).

A GATase cobBQ-type domain is found at 249–436; sequence QCKIACLALS…LHGLFTSDDF (188 aa). The active-site Nucleophile is cysteine 331. Histidine 428 is a catalytic residue.

This sequence belongs to the CobB/CobQ family. CobQ subfamily.

It participates in cofactor biosynthesis; adenosylcobalamin biosynthesis. Its function is as follows. Catalyzes amidations at positions B, D, E, and G on adenosylcobyrinic A,C-diamide. NH(2) groups are provided by glutamine, and one molecule of ATP is hydrogenolyzed for each amidation. The protein is Cobyric acid synthase of Bradyrhizobium diazoefficiens (strain JCM 10833 / BCRC 13528 / IAM 13628 / NBRC 14792 / USDA 110).